Reading from the N-terminus, the 36-residue chain is Pancreatic polypeptide (36 aa).

F36 is modified (phenylalanine amide).

This sequence belongs to the NPY family.

The protein resides in the secreted. Hormone secreted by pancreatic cells that acts as a regulator of pancreatic and gastrointestinal functions. The sequence is that of Pancreatic polypeptide (ppy) from Rana temporaria (European common frog).